The following is a 267-amino-acid chain: Glutamate 5-kinase (267 aa).

Lys-17 lines the ATP pocket. 3 residues coordinate substrate: Ser-57, Asp-144, and Asn-156. ATP contacts are provided by residues 176-177 (SD) and 218-224 (TGGMATK).

The protein belongs to the glutamate 5-kinase family.

It is found in the cytoplasm. The catalysed reaction is L-glutamate + ATP = L-glutamyl 5-phosphate + ADP. It functions in the pathway amino-acid biosynthesis; L-proline biosynthesis; L-glutamate 5-semialdehyde from L-glutamate: step 1/2. Its function is as follows. Catalyzes the transfer of a phosphate group to glutamate to form L-glutamate 5-phosphate. The protein is Glutamate 5-kinase of Clostridium acetobutylicum (strain ATCC 824 / DSM 792 / JCM 1419 / IAM 19013 / LMG 5710 / NBRC 13948 / NRRL B-527 / VKM B-1787 / 2291 / W).